Here is a 109-residue protein sequence, read N- to C-terminus: Protein GOLVEN 5 (109 aa).

The signal sequence occupies residues 1–24 (MTNITSSFLCLLILLLFCLSFGYS). A propeptide spanning residues 25 to 96 (LHGDKDEVLS…EEDDLVAYTA (72 aa)) is cleaved from the precursor. Residues 54–88 (KKAQVRGRSGQEFSKETTKMMMKKTTKKETNVEEE) form a disordered region. Tyr-98 is modified (sulfotyrosine). Pro-106 bears the Hydroxyproline mark.

Belongs to the RGF family. In terms of assembly, binds to LRR receptor-like serine/threonine-protein kinases RGI1, RGI2 and RGI3 to trigger their dimerization with SERK proteins and subsequent signaling. In terms of tissue distribution, expressed in root tips.

Its subcellular location is the secreted. Its function is as follows. Signaling peptide (root growth factor) that maintains the postembryonic root stem cell niche in a PIN2-traffic dependent manner. Root growth factor that regulates the pattern of root growth and lateral root development by modulating the length and the number of cortical cells in the root apical meristem (RAM), and the anticlinal asymmetric cell divisions in lateral root initiation cells. Influences the longitudinal growth rate in the primary root in response to phosphate ion (Pi)-deprivation. The sequence is that of Protein GOLVEN 5 from Arabidopsis thaliana (Mouse-ear cress).